The following is a 752-amino-acid chain: Glutamate carboxypeptidase 2 (752 aa).

The Cytoplasmic portion of the chain corresponds to 1–19; sequence MWNAQQDSDSAEALGRRQR. Serine 10 bears the Phosphoserine mark. Residues 20 to 44 form a helical; Signal-anchor for type II membrane protein membrane-spanning segment; that stretch reads WFCAGTLVLAFTGTFIIGFLFGWFI. Over 45 to 752 the chain is Extracellular; sequence KPSNDSTSSV…AAAETLREVD (708 aa). N-linked (GlcNAc...) asparagine glycans are attached at residues asparagine 48, asparagine 78, asparagine 123, asparagine 155, and asparagine 197. Substrate is bound by residues arginine 212 and asparagine 259. 2 residues coordinate Ca(2+): threonine 271 and tyrosine 274. The segment at 276–589 is NAALADase; the sequence is ANEYAYRHEF…QVRGAMVFEL (314 aa). Asparagine 338 carries an N-linked (GlcNAc...) asparagine glycan. The Zn(2+) site is built by histidine 379 and aspartate 389. Glutamate 426 lines the substrate pocket. The active-site Nucleophile; for NAALADase activity is glutamate 426. Glutamate 427 lines the Zn(2+) pocket. Residues glutamate 435 and glutamate 438 each coordinate Ca(2+). Position 455 (aspartate 455) interacts with Zn(2+). N-linked (GlcNAc...) asparagine glycosylation is found at asparagine 461 and asparagine 478. Substrate-binding positions include 519–520, asparagine 521, 536–538, tyrosine 554, and 554–555; these read SG, RAR, and YH. Histidine 555 is a binding site for Zn(2+). N-linked (GlcNAc...) asparagine glycosylation occurs at asparagine 615. The active-site Charge relay system is serine 630. N-linked (GlcNAc...) asparagine glycosylation is present at asparagine 640. Residues aspartate 668 and histidine 691 each act as charge relay system in the active site. Residue 701–702 participates in substrate binding; the sequence is KY.

This sequence belongs to the peptidase M28 family. M28B subfamily. Homodimer. The cofactor is Zn(2+). As to expression, widely expressed throughout brain regions with highest levels in the hippocampus, dentate gyrus, priform cortex, choroid plexus of ventricles, pineal gland, anterior lobe of the pituitary gland and supraoptic nucleus. High levels also found in the cerebral cortex, substantia nigra, pontine nucleus and the granule cell layer of cerebellum. Highly expressed in astrocytes and non-myelinating Schwann cells. Also expressed in kidney, localizing to the proximal brush border of the renal tube.

Its subcellular location is the cell membrane. The catalysed reaction is Release of an unsubstituted, C-terminal glutamyl residue, typically from Ac-Asp-Glu or folylpoly-gamma-glutamates.. Its activity is regulated as follows. The NAALADase activity is inhibited by beta-NAAG, quisqualic acid and 2-(phosphonomethyl)glutaric acid (PMG). In terms of biological role, has both folate hydrolase and N-acetylated-alpha-linked-acidic dipeptidase (NAALADase) activity. Has a preference for tri-alpha-glutamate peptides. In the intestine, required for the uptake of folate. In the brain, modulates excitatory neurotransmission through the hydrolysis of the neuropeptide, N-aceylaspartylglutamate (NAAG), thereby releasing glutamate. Functionally, also exhibits a dipeptidyl-peptidase IV type activity. In vitro, cleaves Gly-Pro-AMC. In Rattus norvegicus (Rat), this protein is Glutamate carboxypeptidase 2 (Folh1).